We begin with the raw amino-acid sequence, 287 residues long: Proteasome assembly chaperone 1 (287 aa).

The disordered stretch occupies residues 1-32; the sequence is MATFFGEVQSVFSRAVDEDDEEEEGEEEEEDR. Residues 17-32 show a composition bias toward acidic residues; it reads DEDDEEEEGEEEEEDR.

This sequence belongs to the PSMG1 family. In terms of assembly, forms a heterodimer with psmg2. Post-translationally, degraded by the proteasome upon completion of 20S proteasome maturation.

It localises to the cytoplasm. The protein localises to the endoplasmic reticulum. In terms of biological role, chaperone protein which promotes assembly of the 20S proteasome as part of a heterodimer with psmg2. This Xenopus tropicalis (Western clawed frog) protein is Proteasome assembly chaperone 1.